A 594-amino-acid polypeptide reads, in one-letter code: MHEHLKEKLAILPDQPGCYLMKDKQGTVIYVGKAKVLKNRVRSYFTGSHDGKTLRLVGEIVDFEYIVTSSNLEALILELNLIKKHDPKYNIQLKDDKTYPFIKITAEKQPRLLITRNVKKDKGKYFGPYPNAQSAHETKKLLDRMYPLRKCSNMPDKVCLYYHMGQCLAPCVKEVTEEQNKEIVDEIIKFLNGGHKEVRSELETKMYEASEKLEFERAKELRDQIAHIDAIMEKQKMIMSDLVDRDVFGYAVDKGWMCVQVFFVRKGKLIERDVSMFPIYDEPEEGFLTFIGQFYENSSHFKPKEIVVPGSIDSELVERFLEVEATQPKRGKKKDLVELANKNAKIALEEKFYLIERDEERTIKAVENLGKQLGIETPYRIEAFDNSNIQGTNPVSAMIAFIDGKPAKKEYRKYKIKTVQGPDDYESMREVVRRRYTRALKEGLPLPDLIIIDGGKGHLAAASDVLENELGLYIPMAGLVKDDKHKTSHLIIGDPPEPVMLERNSQEFYLLQRIQDEVHRFAITFHRQLHGKSVIQSALDDIPGIGDKRKKILLKHFGSLKKMKEASVTEFVEAGMPKNVAETIYSYLADKKTL.

Residues 14-91 (DQPGCYLMKD…IKKHDPKYNI (78 aa)) form the GIY-YIG domain. In terms of domain architecture, UVR spans 196–231 (KEVRSELETKMYEASEKLEFERAKELRDQIAHIDAI).

It belongs to the UvrC family. As to quaternary structure, interacts with UvrB in an incision complex.

Its subcellular location is the cytoplasm. In terms of biological role, the UvrABC repair system catalyzes the recognition and processing of DNA lesions. UvrC both incises the 5' and 3' sides of the lesion. The N-terminal half is responsible for the 3' incision and the C-terminal half is responsible for the 5' incision. The polypeptide is UvrABC system protein C (Bacillus cereus (strain AH187)).